The sequence spans 202 residues: Complement component C8 gamma chain (202 aa).

A signal peptide spans methionine 1–glycine 20. Glutamine 21 carries the post-translational modification Pyrrolidone carboxylic acid. An intrachain disulfide couples cysteine 96 to cysteine 188.

This sequence belongs to the calycin superfamily. Lipocalin family. In terms of assembly, heterotrimer of 3 chains: alpha (C8A), beta (C8B) and gamma (C8G); the alpha and gamma chains are disulfide bonded. Component of the membrane attack complex (MAC), composed of complement C5b, C6, C7, C8A, C8B, C8G and multiple copies of the pore-forming subunit C9.

It is found in the secreted. The protein localises to the target cell membrane. Its activity is regulated as follows. Membrane attack complex (MAC) assembly is inhibited by CD59, thereby protecting self-cells from damage during complement activation. MAC assembly is also inhibited by clusterin (CLU) chaperones that inhibit polymerization of C9. Its function is as follows. Component of the membrane attack complex (MAC), a multiprotein complex activated by the complement cascade, which inserts into a target cell membrane and forms a pore, leading to target cell membrane rupture and cell lysis. The MAC is initiated by proteolytic cleavage of C5 into complement C5b in response to the classical, alternative, lectin and GZMK complement pathways. The complement pathways consist in a cascade of proteins that leads to phagocytosis and breakdown of pathogens and signaling that strengthens the adaptive immune system. C8G, together with C8A and C8B, inserts into the target membrane, but does not form pores by itself. During MAC assembly, associates with C5b, C6 and C7 to form the C5b8 intermediate complex that inserts into the target membrane and traverses the bilayer increasing membrane rigidity. This chain is Complement component C8 gamma chain, found in Homo sapiens (Human).